We begin with the raw amino-acid sequence, 2230 residues long: MEPNNNISNSNNGGSGIDGDGKEDSIYSYGYSSTTNSYNGVGNNSNLDKDDLDVFSLLDSITNTSYLLKPPPKIQKPPSPFSYPIELDQEEASLKEQELKLLELRLELQNTIIANSLINNNNNSNNNNNDNNNNNNNNNNNNNNNNNIQLNNSSLTPPIINISLPTTPSTVNLTPKKPNLYINTKLPNENDDIIITPIVPLSGTITPPIPVDSPISFAETEQIIVVPQLQLLDEIINTTDNIGGGAAEKLQNIDPEIIIKLETEIKISSDEKENKEGGQVENKEEKEKLDQKLENENENEKVKEKEKEDEKEEQQVKVKEKEKEKENENEKNHNDKNDDDDDDEDNEKDKISKTTVSVSIKVSNENTPIINATDSSSNSINSSSNNSIATTPGRLSSSGLINHKKYDEFIEPTFFLSTASIGLNRLKSSNGASGSNSGNVSPSGPTPILSTLFQKNNSKQDLLKNSSENSFCNNNNNNNNNNNNNNNNNNNNNNNNNNSNNSNINNNNNNNSSNNNNNNNNNNNNNNNNNNNNNNNNNNNNNNNNNNNNNNNNNINGFSTIKSSSSSSPTNSPSSSLNIMNFFNTGSISSIVGSGSSSLGKGSSKKIKDSYSNNNNNSSTADLSEQVLLANMDNPFSSIPGRIKKNLDRRGATIANPQQLTSLIKSGNTAKLQKFFGLEKEDLLAVNIIQQQQLQLQHQHQQHQQAHQHQHQQQQQHQQQLKSRSNTTNTPLMMFSVSENNSPNNSPPVSPPSSPMLSPLSSSPPSWISGTSPARKLRGRAATGSLLSGSSSNNNTTTTTTTTTSNSNSLSNNNRSNSFVDSRPFLPPVKTMPNIGGGQYNTTPPLLPSQTGDHVVKTPKDYHRKPKLLIAKLLKNNSLYMEKEKEKEKEKEKNESSKLDIKNFAASGGQLSLSSNQIISNNSNSSSNNNNNNNNNNNNNNNNNNGLSNNIVINNSNNNSNNNSASSSPTSSNSGYLNESNFILSSSSKESLSALMKDRIGYDLFKIFCKELVNKQGTNLVNILLFIEEVESFQSGIFNTDQLVLEETDRIFYKFILESTAAEFDINIPKRYFYQINHHIKEKIPNKYVFEKVLKALKDETSADAFKRFCILHSTTNGTSAPTNSTTIHSPSLAVPLSSSSWNGLSKETSNSLVNNNTTPNTSTASPSITASSSSTSINNNTTTATATTVTTPVIVHQRHHSSTVSGHYGGHRNHLQHVKLSHSNSPSPSSSPPDSYTSNQPLIFNGSPLGVSGSDYSFNKFGNNSLVPPNLNISQASGGGSGNSNNNNNNELIINIKGLSPPTSHISSPPLSPRLSMIRPHFTNGSMKSSLFQQQLQPTGSINSSPINNHQVSGGCGGDQTTELQTETLDDFIPHGVAFGFKRGACKPPCDCLTYQSEGDKGGACLNCGHYPALHKNLGKISNSNNSIDIDSLQQQQQHQQIHHQSNLLPNTLLNLSNVTMASGALSPSTLNQQQHQILQQQQQQQQQQQQQQQQQQQQQQQQQQQQQQQHQQHQQFQPNPSPSPPLTPSSNSIIQPSQQQQPQQIVNTLINSSSDNTLVLPTIPNITNTPPSPTQTLPLPSSSSSSLVIPNSNINSSPTSPSLSYNNNSNSNSNAGVGSIPLSFNEIVNSNNSPNINNNGIINTSSNNNINNTNASINGSANQLFNNPMTFSGNEIVLPPIVQSSGGSLFTDSPLSSPKRIHFHNGIGNGDLLNNRAVLHSTVSNNNNINSNNNNNNNNNNNNNNNNNNNNNNNNNNNNNNNSNNNNGNDSLAILQKLIANGGSLKNAIYSLNNRSNSSNNLMSNNNINNSNIPNRLLNNRSNSSNSLMSSNNKNNYNNYNSNNNHIYSNEELTEIHQQQQLQQQQQQQQQLQQQQQQQQQQQQQQQQQQQQQQQQQQQQQQENNTTTTTTTTSNRPFRSNNPTISQELDTKVLMNFNNWAIDGEEIVFLNKLGEGTSAKVYRATWRNQEVAVKVLRSEPESQKLLDFLKELEIMSSLRSPHVVYFYGMVLDPKICMIMEYCSNQTLYHLMHLQMNFTWDWVFKFAIEMVRGVNCLHSWKPVIVHRDLKSLNLLVSDNWTIKVADFGLSRFATAKSASNRTTRGTFAYCAPEVFYGIHTTKGDIFSIGIILWELAVRCIKSKYEKPFSEFKHIQYDFQILVQTSKFNLRPTIPQNCPEAFSNLISNCWESSPDNRPSCPEILDSLLDMEKKYTENKRKWDKIREKPKK.

The span at 1–12 (MEPNNNISNSNN) shows a compositional bias: low complexity. 9 disordered regions span residues 1–22 (MEPN…GDGK), 121–152 (NNNS…QLNN), 270–352 (DEKE…DKIS), 368–397 (PIIN…RLSS), 430–451 (NGAS…ILST), 464–574 (KNSS…NSPS), 593–620 (GSGS…NSST), 699–849 (QHQQ…LLPS), and 915–974 (SNQI…SSNS). A compositionally biased stretch (basic and acidic residues) spans 270 to 336 (DEKENKEGGQ…NENEKNHNDK (67 aa)). Acidic residues predominate over residues 337-346 (NDDDDDDEDN). Composition is skewed to low complexity over residues 375-388 (SSSN…NNSI), 430-447 (NGAS…GPTP), 473-574 (NNNN…NSPS), 593-602 (GSGSSSLGKG), 610-619 (SYSNNNNNSS), and 699-721 (QHQQ…QQQL). Polar residues predominate over residues 722–731 (KSRSNTTNTP). A compositionally biased stretch (pro residues) spans 745–754 (NSPPVSPPSS). Low complexity-rich tracts occupy residues 755-766 (PMLSPLSSSPPS) and 783-818 (TGSL…RSNS). A compositionally biased stretch (polar residues) spans 840 to 849 (YNTTPPLLPS). An RGS domain is found at 991-1119 (SLSALMKDRI…CILHSTTNGT (129 aa)). 8 disordered regions span residues 1146 to 1181 (SKET…INNN), 1220 to 1243 (KLSH…NQPL), 1300 to 1362 (LSPP…GDQT), 1506 to 1546 (QQQQ…QPQQ), 1563 to 1611 (PTIP…NNNS), 1725 to 1771 (VSNN…NNGN), 1802 to 1848 (NNLM…NNNH), and 1905 to 1929 (ENNT…TISQ). 2 stretches are compositionally biased toward low complexity: residues 1149 to 1181 (TSNS…INNN) and 1222 to 1239 (SHSN…SYTS). Residues 1324 to 1353 (TNGSMKSSLFQQQLQPTGSINSSPINNHQV) show a composition bias toward polar residues. Composition is skewed to low complexity over residues 1506 to 1520 (QQQQ…QFQP) and 1530 to 1546 (PSSN…QPQQ). Residues 1726–1769 (SNNNNINSNNNNNNNNNNNNNNNNNNNNNNNNNNNNNNNSNNNN) are compositionally biased toward low complexity. Residues 1905-1915 (ENNTTTTTTTT) show a composition bias toward low complexity. Residues 1916-1929 (SNRPFRSNNPTISQ) are compositionally biased toward polar residues. The Protein kinase domain occupies 1949–2208 (IVFLNKLGEG…SCPEILDSLL (260 aa)). ATP-binding positions include 1955–1963 (LGEGTSAKV) and K1976. Residue D2069 is the Proton acceptor of the active site.

It belongs to the protein kinase superfamily. TKL Ser/Thr protein kinase family.

The catalysed reaction is L-seryl-[protein] + ATP = O-phospho-L-seryl-[protein] + ADP + H(+). It carries out the reaction L-threonyl-[protein] + ATP = O-phospho-L-threonyl-[protein] + ADP + H(+). This Dictyostelium discoideum (Social amoeba) protein is Probable serine/threonine-protein kinase DDB_G0267686.